Here is a 178-residue protein sequence, read N- to C-terminus: Major urinary protein 4 (178 aa).

An N-terminal signal peptide occupies residues 1–16 (MKLLLCLGLTLVCIHA). The cysteines at positions 80 and 173 are disulfide-linked.

It belongs to the calycin superfamily. Lipocalin family. Expressed in lacrimal gland, parotid gland, sublingual gland, nasal mucus, and vomeronasal organ.

The protein resides in the secreted. In terms of biological role, binds pheromones, likely to displace pheromones complexed to urinary MUPs and transport them to the vomeronasal organ (VNO) where they associate with their neuronal receptor(s). MUP4 is highly specific for the male mouse pheromone 2-sec-butyl-4,5-dihydrothiazole (SBT). The polypeptide is Major urinary protein 4 (Mup4) (Mus musculus (Mouse)).